A 591-amino-acid polypeptide reads, in one-letter code: ATPase family AAA domain-containing protein 3A (591 aa).

A disordered region spans residues 1–52 (MSWLFGIKGPKGEGTGPPLPLPPAQPGAEGGGDRGAGDRPSPKDKWSNFDPT). Ser2 is modified (N-acetylserine). The required for interaction with the inner surface of the mitochondrial outer membrane stretch occupies residues 2-49 (SWLFGIKGPKGEGTGPPLPLPPAQPGAEGGGDRGAGDRPSPKDKWSNF). Topologically, residues 2 to 245 (SWLFGIKGPK…FRAFVTDWDK (244 aa)) are mitochondrial intermembrane. Basic and acidic residues predominate over residues 31-47 (GGDRGAGDRPSPKDKWS). The stretch at 55 to 216 (ERAAKAAREL…REQIRLKAAE (162 aa)) forms a coiled coil. A helical membrane pass occupies residues 246–263 (VTATVAGLTLLAVGVYSA). Residues 264–586 (KNATSVAGRY…DSQTNKPPHP (323 aa)) lie on the Mitochondrial matrix side of the membrane. The tract at residues 289 to 304 (RISVLEALRHPIQVSR) is S100B-binding. 351-358 (GPPGTGKT) contacts ATP. Lys490 bears the N6-acetyllysine; alternate mark. Residue Lys490 is modified to N6-succinyllysine; alternate. Lys494 and Lys512 each carry N6-acetyllysine. A disordered region spans residues 572-591 (KVERPDSQTNKPPHPSLLSC).

It belongs to the AAA ATPase family. As to quaternary structure, can form homooligomers. Homodimer formation at the N-terminus may be regulated by ATP and is required for the interaction with the inner surface of the mitochondrial outer membrane and correct mitochondrial homeostasis. Interacts with components of the mitochondrial ribosome and with other proteins involved in mitochondrial RNA metabolism. May also interact with protein involved in lipid metabolism, including STARD9. May interact with FAM210A. Interacts with GADD45GIP1. Interacts with S100B in a Ca(+2)- and Zn(+2)-dependent manner; this interaction probably occurs in the cytosol prior to mitochondrial targeting. S100B could assist ATAD3A cytoplasmic processing, preventing aggregation and favoring mitochondrial localization. Interacts with HSP60/HSPD1. Interacts with CLPB. Interacts with EIF2AK3/PERK; ATAD3A and EIF2S1/eIF-2-alpha occupy a common binding site within the cytoplasmic loop of EIF2AK3/PERK, leading to prevent EIF2AK3/PERK association with its substrate EIF2S1/eIF-2-alpha. Expressed in heart, spleen, kidney, liver and at smaller levels, in lung and muscle (at protein level).

The protein localises to the mitochondrion inner membrane. It localises to the mitochondrion matrix. Its subcellular location is the mitochondrion nucleoid. The catalysed reaction is ATP + H2O = ADP + phosphate + H(+). Its function is as follows. Essential for mitochondrial network organization, mitochondrial metabolism and cell growth at organism and cellular level. May play an important role in mitochondrial protein synthesis. May also participate in mitochondrial DNA replication. May bind to mitochondrial DNA D-loops and contribute to nucleoid stability. Required for enhanced channeling of cholesterol for hormone-dependent steroidogenesis. Involved in mitochondrial-mediated antiviral innate immunity. Required to protect mitochondria from the PERK-mediated unfolded protein response: specifically inhibits the activity of EIF2AK3/PERK at mitochondria-endoplasmic reticulum contact sites, thereby providing a safe haven for mitochondrial protein translation during endoplasmic reticulum stress. Ability to inhibit EIF2AK3/PERK is independent of its ATPase activity. Also involved in the mitochondrial DNA damage response by promoting signaling between damaged genomes and the mitochondrial membrane, leading to activation of the integrated stress response (ISR). The polypeptide is ATPase family AAA domain-containing protein 3A (Atad3a) (Mus musculus (Mouse)).